Here is a 278-residue protein sequence, read N- to C-terminus: Pantothenate synthetase (278 aa).

Residue 26 to 33 participates in ATP binding; that stretch reads MGNLHEGH. His33 acts as the Proton donor in catalysis. Gln57 contacts (R)-pantoate. Residue Gln57 participates in beta-alanine binding. 144 to 147 is a binding site for ATP; the sequence is GKKD. Gln150 is a binding site for (R)-pantoate. ATP contacts are provided by residues Gly173 and 181–184; that span reads LSSR.

Belongs to the pantothenate synthetase family. In terms of assembly, homodimer.

The protein resides in the cytoplasm. The catalysed reaction is (R)-pantoate + beta-alanine + ATP = (R)-pantothenate + AMP + diphosphate + H(+). It functions in the pathway cofactor biosynthesis; (R)-pantothenate biosynthesis; (R)-pantothenate from (R)-pantoate and beta-alanine: step 1/1. Its function is as follows. Catalyzes the condensation of pantoate with beta-alanine in an ATP-dependent reaction via a pantoyl-adenylate intermediate. In Neisseria meningitidis serogroup C / serotype 2a (strain ATCC 700532 / DSM 15464 / FAM18), this protein is Pantothenate synthetase.